A 498-amino-acid chain; its full sequence is ATP synthase subunit beta, chloroplastic (498 aa).

172–179 (GGAGVGKT) serves as a coordination point for ATP.

It belongs to the ATPase alpha/beta chains family. As to quaternary structure, F-type ATPases have 2 components, CF(1) - the catalytic core - and CF(0) - the membrane proton channel. CF(1) has five subunits: alpha(3), beta(3), gamma(1), delta(1), epsilon(1). CF(0) has four main subunits: a(1), b(1), b'(1) and c(9-12).

The protein localises to the plastid. It localises to the chloroplast thylakoid membrane. It carries out the reaction ATP + H2O + 4 H(+)(in) = ADP + phosphate + 5 H(+)(out). Its function is as follows. Produces ATP from ADP in the presence of a proton gradient across the membrane. The catalytic sites are hosted primarily by the beta subunits. The sequence is that of ATP synthase subunit beta, chloroplastic from Nymphaea odorata (White water lily).